Reading from the N-terminus, the 133-residue chain is Small ribosomal subunit protein uS8 (133 aa).

This sequence belongs to the universal ribosomal protein uS8 family. In terms of assembly, part of the 30S ribosomal subunit. Contacts proteins S5 and S12.

One of the primary rRNA binding proteins, it binds directly to 16S rRNA central domain where it helps coordinate assembly of the platform of the 30S subunit. In Rippkaea orientalis (strain PCC 8801 / RF-1) (Cyanothece sp. (strain PCC 8801)), this protein is Small ribosomal subunit protein uS8.